The primary structure comprises 89 residues: Small ribosomal subunit protein uS15 (89 aa).

This sequence belongs to the universal ribosomal protein uS15 family. Part of the 30S ribosomal subunit. Forms a bridge to the 50S subunit in the 70S ribosome, contacting the 23S rRNA.

One of the primary rRNA binding proteins, it binds directly to 16S rRNA where it helps nucleate assembly of the platform of the 30S subunit by binding and bridging several RNA helices of the 16S rRNA. Functionally, forms an intersubunit bridge (bridge B4) with the 23S rRNA of the 50S subunit in the ribosome. The protein is Small ribosomal subunit protein uS15 of Aeromonas hydrophila subsp. hydrophila (strain ATCC 7966 / DSM 30187 / BCRC 13018 / CCUG 14551 / JCM 1027 / KCTC 2358 / NCIMB 9240 / NCTC 8049).